The primary structure comprises 429 residues: tRNA threonylcarbamoyladenosine dehydratase 1 (429 aa).

2 consecutive transmembrane segments (helical) span residues 3–23 (NNTW…TQLA) and 74–94 (EQYI…TMLI). A Phosphoserine modification is found at Ser259. The helical transmembrane segment at 279 to 299 (LPELGTMPGIFGLSIATWILT) threads the bilayer.

This sequence belongs to the HesA/MoeB/ThiF family.

The protein localises to the mitochondrion outer membrane. Functionally, catalyzes the ATP-dependent dehydration of threonylcarbamoyladenosine at position 37 (t(6)A37) to form cyclic t(6)A37 (ct(6)A37) in tRNAs that read codons beginning with adenine. This chain is tRNA threonylcarbamoyladenosine dehydratase 1 (TCD1), found in Saccharomyces cerevisiae (strain ATCC 204508 / S288c) (Baker's yeast).